The sequence spans 451 residues: Heat shock factor protein (451 aa).

Residues 12–117 (VPAFLAKLWT…LLENIKRKVN (106 aa)) mediate DNA binding. Disordered regions lie at residues 210-273 (LNDS…LEAS) and 285-307 (LTPS…PISP). The segment covering 232–246 (PSSTSYPVSGFTDSS) has biased composition (polar residues).

The protein belongs to the HSF family. In terms of assembly, homotrimer. Post-translationally, exhibits temperature-dependent phosphorylation.

Its subcellular location is the nucleus. Functionally, DNA-binding protein that specifically binds heat shock promoter elements (HSE) and activates transcription. The sequence is that of Heat shock factor protein (hsf1) from Xenopus laevis (African clawed frog).